A 101-amino-acid chain; its full sequence is NAD(P)H-quinone oxidoreductase subunit 4L, chloroplastic (101 aa).

The next 3 helical transmembrane spans lie at 2–22 (MLEH…YGLI), 32–52 (MCLE…SDFF), and 61–81 (IFSI…LAIV).

The protein belongs to the complex I subunit 4L family. NDH is composed of at least 16 different subunits, 5 of which are encoded in the nucleus.

The protein resides in the plastid. It localises to the chloroplast thylakoid membrane. The enzyme catalyses a plastoquinone + NADH + (n+1) H(+)(in) = a plastoquinol + NAD(+) + n H(+)(out). It catalyses the reaction a plastoquinone + NADPH + (n+1) H(+)(in) = a plastoquinol + NADP(+) + n H(+)(out). Functionally, NDH shuttles electrons from NAD(P)H:plastoquinone, via FMN and iron-sulfur (Fe-S) centers, to quinones in the photosynthetic chain and possibly in a chloroplast respiratory chain. The immediate electron acceptor for the enzyme in this species is believed to be plastoquinone. Couples the redox reaction to proton translocation, and thus conserves the redox energy in a proton gradient. The sequence is that of NAD(P)H-quinone oxidoreductase subunit 4L, chloroplastic from Cicer arietinum (Chickpea).